A 431-amino-acid polypeptide reads, in one-letter code: Large envelope protein (431 aa).

Gly2 carries N-myristoyl glycine; by host lipidation. The segment at 2-148 is pre-S1; it reads GNNIKVTFNP…PPLRDTHPHL (147 aa). The segment at 2 to 207 is pre-S; sequence GNNIKVTFNP…PSTTGDPALS (206 aa). The Virion surface; in external conformation segment spans residues 2–214; that stretch reads GNNIKVTFNP…ALSPEMSPSS (213 aa). Over 2–286 the chain is Intravirion; in internal conformation; that stretch reads GNNIKVTFNP…NGFRWMYLRR (285 aa). N-linked (GlcNAc...) asparagine glycosylation is present at Asn3. A disordered region spans residues 115 to 147; it reads IPRGLVPPQTPTNRDQGRKPTPPTPPLRDTHPH. The tract at residues 149–207 is pre-S2; sequence TMKNQTFHLQGFVDGLRDLTTTERQHNAYRDPFTTLSPAVPTVSTILSPPSTTGDPALS. Residues 215–235 form a helical membrane-spanning segment; that stretch reads LLGLLAGLQVVYFLWTKILTI. At 236–286 the chain is on the intravirion; in external conformation side; sequence AQNLDWWCTSLSFPGGIPECTGQNSQFQTCKHLPTSCPPTCNGFRWMYLRR. Residues 287 to 307 form a helical membrane-spanning segment; sequence FIIYLLVLLLCLIFLLVLLDW. Residues 308 to 379 are Virion surface-facing; the sequence is KGLIPVCPLQ…WALARLSWLN (72 aa). Asn351 carries N-linked (GlcNAc...) asparagine; by host glycosylation. Residues 380–400 form a helical membrane-spanning segment; sequence LLVPLLQWLGGISLIAWFLLI. Over 401 to 406 the chain is Intravirion; that stretch reads WMIWFW. Residues 407–429 form a helical membrane-spanning segment; sequence GPALLSILPPFIPIFVLFFLIWV. The Virion surface segment spans residues 430-431; that stretch reads YI.

The protein belongs to the orthohepadnavirus major surface antigen family. In terms of assembly, in its internal form (Li-HBsAg), interacts with the capsid protein and with the isoform S. Interacts with host chaperone CANX. As to quaternary structure, associates with host chaperone CANX through its pre-S2 N glycan; this association may be essential for isoform M proper secretion. Interacts with isoform L. Interacts with the antigens of satellite virus HDV (HDVAgs); this interaction is required for encapsidation of HDV genomic RNA. Isoform M is N-terminally acetylated by host at a ratio of 90%, and N-glycosylated by host at the pre-S2 region. Post-translationally, myristoylated.

It is found in the virion membrane. The large envelope protein exists in two topological conformations, one which is termed 'external' or Le-HBsAg and the other 'internal' or Li-HBsAg. In its external conformation the protein attaches the virus to cell receptors and thereby initiating infection. This interaction determines the species specificity and liver tropism. This attachment induces virion internalization predominantly through caveolin-mediated endocytosis. The large envelope protein also assures fusion between virion membrane and endosomal membrane. In its internal conformation the protein plays a role in virion morphogenesis and mediates the contact with the nucleocapsid like a matrix protein. Functionally, the middle envelope protein plays an important role in the budding of the virion. It is involved in the induction of budding in a nucleocapsid independent way. In this process the majority of envelope proteins bud to form subviral lipoprotein particles of 22 nm of diameter that do not contain a nucleocapsid. This is Large envelope protein from Marmota monax (Woodchuck).